A 492-amino-acid polypeptide reads, in one-letter code: Catalase isozyme 2 (492 aa).

Active-site residues include H65 and N138. Y348 provides a ligand contact to heme.

This sequence belongs to the catalase family. As to quaternary structure, homotetramer. It depends on heme as a cofactor.

The protein localises to the peroxisome. The enzyme catalyses 2 H2O2 = O2 + 2 H2O. In terms of biological role, occurs in almost all aerobically respiring organisms and serves to protect cells from the toxic effects of hydrogen peroxide. The chain is Catalase isozyme 2 (CAT2) from Solanum lycopersicum (Tomato).